Here is a 550-residue protein sequence, read N- to C-terminus: CTP synthase (550 aa).

Residues 1 to 265 are amidoligase domain; that stretch reads MTKFIFVTGG…DEIVVEQLGL (265 aa). A CTP-binding site is contributed by Ser-13. Ser-13 provides a ligand contact to UTP. 14 to 19 lines the ATP pocket; that stretch reads SLGKGI. Tyr-54 lines the L-glutamine pocket. ATP is bound at residue Asp-71. Positions 71 and 139 each coordinate Mg(2+). CTP-binding positions include 146–148, 186–191, and Lys-222; these read DIE and KTKPTQ. Residues 186–191 and Lys-222 each bind UTP; that span reads KTKPTQ. Residues 290 to 541 form the Glutamine amidotransferase type-1 domain; sequence TITLVGKYVD…IRAAAEHRRR (252 aa). Residue Gly-351 coordinates L-glutamine. Cys-378 (nucleophile; for glutamine hydrolysis) is an active-site residue. L-glutamine contacts are provided by residues 379–382, Glu-402, and Arg-469; that span reads LGMQ. Active-site residues include His-514 and Glu-516.

The protein belongs to the CTP synthase family. As to quaternary structure, homotetramer.

It catalyses the reaction UTP + L-glutamine + ATP + H2O = CTP + L-glutamate + ADP + phosphate + 2 H(+). The enzyme catalyses L-glutamine + H2O = L-glutamate + NH4(+). The catalysed reaction is UTP + NH4(+) + ATP = CTP + ADP + phosphate + 2 H(+). It functions in the pathway pyrimidine metabolism; CTP biosynthesis via de novo pathway; CTP from UDP: step 2/2. With respect to regulation, allosterically activated by GTP, when glutamine is the substrate; GTP has no effect on the reaction when ammonia is the substrate. The allosteric effector GTP functions by stabilizing the protein conformation that binds the tetrahedral intermediate(s) formed during glutamine hydrolysis. Inhibited by the product CTP, via allosteric rather than competitive inhibition. Functionally, catalyzes the ATP-dependent amination of UTP to CTP with either L-glutamine or ammonia as the source of nitrogen. Regulates intracellular CTP levels through interactions with the four ribonucleotide triphosphates. The chain is CTP synthase from Nitrosococcus oceani (strain ATCC 19707 / BCRC 17464 / JCM 30415 / NCIMB 11848 / C-107).